Consider the following 334-residue polypeptide: N-acetylmuramate/N-acetylglucosamine kinase (334 aa).

It belongs to the kinase AmgK family.

The enzyme catalyses N-acetyl-D-muramate + ATP = N-acetyl-alpha-D-muramate 1-phosphate + ADP + H(+). It catalyses the reaction N-acetyl-D-glucosamine + ATP = N-acetyl-alpha-D-glucosamine 1-phosphate + ADP + H(+). It participates in cell wall biogenesis; peptidoglycan recycling. In terms of biological role, sugar kinase that catalyzes the ATP-dependent phosphorylation of N-acetylmuramate (MurNAc) and N-acetylglucosamine (GlcNAc) at its C1 hydroxyl group, leading to MurNAc alpha-1P and GlcNAc alpha-1P, respectively. Is likely involved in peptidoglycan recycling as part of a cell wall recycling pathway that bypasses de novo biosynthesis of the peptidoglycan precursor UDP-MurNAc. Is able to complement the fosfomycin sensitivity phenotype of a P.putida mutant lacking amgK. This is N-acetylmuramate/N-acetylglucosamine kinase from Neisseria meningitidis serogroup B (strain ATCC BAA-335 / MC58).